A 131-amino-acid polypeptide reads, in one-letter code: Small ribosomal subunit protein bS6 (131 aa).

A disordered region spans residues S100–E131. Residues K104–F116 are compositionally biased toward basic and acidic residues. A compositionally biased stretch (acidic residues) spans T120 to E131.

This sequence belongs to the bacterial ribosomal protein bS6 family.

Binds together with bS18 to 16S ribosomal RNA. The sequence is that of Small ribosomal subunit protein bS6 from Erwinia tasmaniensis (strain DSM 17950 / CFBP 7177 / CIP 109463 / NCPPB 4357 / Et1/99).